We begin with the raw amino-acid sequence, 265 residues long: Reduced viability upon starvation protein 161 (265 aa).

Residues 15–239 (HSVIIKNVDK…LDQQSRDDYA (225 aa)) form the BAR domain. The stretch at 126–193 (YFKEIEEAIK…NQLKTELPQL (68 aa)) forms a coiled coil.

It localises to the cytoplasm. The protein resides in the cytoskeleton. Its function is as follows. Component of a cytoskeletal structure that is required for the formation of endocytic vesicles at the plasma membrane level. In Saccharomyces cerevisiae (strain ATCC 204508 / S288c) (Baker's yeast), this protein is Reduced viability upon starvation protein 161 (RVS161).